Here is a 255-residue protein sequence, read N- to C-terminus: uncharacterized protein (255 aa).

The span at 1–10 (MSDSIHRRKV) shows a compositional bias: basic residues. The segment at 1-78 (MSDSIHRRKV…SPMRGLPMEE (78 aa)) is disordered. The span at 44–61 (VFERSFSEPSLNRHRDGQ) shows a compositional bias: basic and acidic residues.

This is an uncharacterized protein from Arabidopsis thaliana (Mouse-ear cress).